The following is a 241-amino-acid chain: Probable phosphatase Cthe_0111 (241 aa).

Zn(2+)-binding residues include histidine 8, histidine 10, histidine 16, histidine 41, glutamate 74, histidine 102, histidine 132, aspartate 192, and histidine 194.

The protein belongs to the PHP family. The cofactor is Zn(2+).

In Acetivibrio thermocellus (strain ATCC 27405 / DSM 1237 / JCM 9322 / NBRC 103400 / NCIMB 10682 / NRRL B-4536 / VPI 7372) (Clostridium thermocellum), this protein is Probable phosphatase Cthe_0111.